The following is a 266-amino-acid chain: Transcription regulator FGM4 (266 aa).

Residues 17–36 are disordered; that stretch reads KTQNRLAKRKSRIHAGKQQG. A compositionally biased stretch (basic residues) spans 18-31; the sequence is TQNRLAKRKSRIHA. ANK repeat units follow at residues 183–212 and 216–245; these read KPGS…NVNE and AGYS…DWSY.

It localises to the nucleus. Its function is as follows. Transcription regulator; part of the Fg3_54/C64 gene cluster that mediates the biosynthesis of the octapeptide fusaoctaxin A, a virulence factor that is required for cell-to-cell invasiveness of plant host. Positively regulates the expression the Fg3_54/C64 gene cluster. The protein is Transcription regulator FGM4 of Gibberella zeae (strain ATCC MYA-4620 / CBS 123657 / FGSC 9075 / NRRL 31084 / PH-1) (Wheat head blight fungus).